A 323-amino-acid polypeptide reads, in one-letter code: Thymidylate synthase (323 aa).

DUMP contacts are provided by residues R21 and 172 to 173; that span reads RR. The Nucleophile role is filled by C192. DUMP-binding positions include 214 to 217, N225, and 255 to 257; these read RSND and HVY. D217 is a binding site for (6R)-5,10-methylene-5,6,7,8-tetrahydrofolate. A322 is a binding site for (6R)-5,10-methylene-5,6,7,8-tetrahydrofolate.

Belongs to the thymidylate synthase family. Bacterial-type ThyA subfamily. Homodimer.

It is found in the cytoplasm. It carries out the reaction dUMP + (6R)-5,10-methylene-5,6,7,8-tetrahydrofolate = 7,8-dihydrofolate + dTMP. It participates in pyrimidine metabolism; dTTP biosynthesis. Functionally, catalyzes the reductive methylation of 2'-deoxyuridine-5'-monophosphate (dUMP) to 2'-deoxythymidine-5'-monophosphate (dTMP) while utilizing 5,10-methylenetetrahydrofolate (mTHF) as the methyl donor and reductant in the reaction, yielding dihydrofolate (DHF) as a by-product. This enzymatic reaction provides an intracellular de novo source of dTMP, an essential precursor for DNA biosynthesis. The polypeptide is Thymidylate synthase (Pseudomonas syringae pv. tomato (strain ATCC BAA-871 / DC3000)).